The following is a 644-amino-acid chain: MSSSRKQARLDAKTNIESLSVQPYPNSNKVYIEGSRPDIRVPMREISLADSLVGGTKESPIFEPNEPIQVYDTSGVYTDPSYDIDVYRGLPKLRQEWIEERNDTELLDGVSSVYSQERLADETLDELRYGNLPTIRRAKQGQCVTQLHYARQGIITPEMEYIAIRENMGRQKFADEQLNHQHPGHSFGANLPKEITPEFVRKEVAEGRAIIPSNINHPEAEPMIIGRNFLIKVNANIGNSSVSSSIEEEVEKLVWSTRWGGDTVMDLSTGRNIHETREWILRNSPVPIGTVPMYQALEKVNGVAENLNWEVMRDTLIEQAEQGVDYFTIHAGLLLRYVPMTAKRVTGIVSRGGSIIAKWCLAHHQESFLYTHFREICEICAKYDVALSLGDGLRPGSVADANDEAQFAELRTLGELTKVAWEYDVQVIIEGPGHVPMHMIKENMDEQLKHCHEAPFYTLGPLTTDIAPGYDHITSGIGAAMIGWYGCAMLCYVTPKEHLGLPNKDDVKTGLITYKLAAHAGDLAKGHPGAQIRDNALSKARFEFRWEDQFNLSLDPITAREYHDETLPQESGKVAHFCSMCGPKFCSMKISQEVREYAKDSEQVALDQAIEIKMIDDPLEGMRQKSEEFKASGSELYHPAVEAE.

Residues asparagine 236, methionine 265, tyrosine 294, histidine 330, 350–352 (SRG), 391–394 (DGLR), and glutamate 430 contribute to the substrate site. Position 434 (histidine 434) interacts with Zn(2+). Substrate is bound at residue tyrosine 457. Histidine 498 contributes to the Zn(2+) binding site. Residues cysteine 578, cysteine 581, and cysteine 586 each coordinate [4Fe-4S] cluster. Residues 623–644 (RQKSEEFKASGSELYHPAVEAE) are disordered.

This sequence belongs to the ThiC family. In terms of assembly, homodimer. The cofactor is [4Fe-4S] cluster.

It carries out the reaction 5-amino-1-(5-phospho-beta-D-ribosyl)imidazole + S-adenosyl-L-methionine = 4-amino-2-methyl-5-(phosphooxymethyl)pyrimidine + CO + 5'-deoxyadenosine + formate + L-methionine + 3 H(+). It functions in the pathway cofactor biosynthesis; thiamine diphosphate biosynthesis. Its function is as follows. Catalyzes the synthesis of the hydroxymethylpyrimidine phosphate (HMP-P) moiety of thiamine from aminoimidazole ribotide (AIR) in a radical S-adenosyl-L-methionine (SAM)-dependent reaction. This is Phosphomethylpyrimidine synthase from Aliivibrio fischeri (strain MJ11) (Vibrio fischeri).